We begin with the raw amino-acid sequence, 166 residues long: Small ribosomal subunit protein uS3m (166 aa).

The N-terminal 25 residues, 1 to 25 (MLRSLQHVESHINQCRRISTTSTLL), are a transit peptide targeting the mitochondrion.

This sequence belongs to the universal ribosomal protein uS3 family. In terms of assembly, component of the mitochondrial ribosome small subunit (28S) which comprises a 12S rRNA and about 30 distinct proteins.

It is found in the mitochondrion. The protein is Small ribosomal subunit protein uS3m (mrps-24) of Caenorhabditis briggsae.